The chain runs to 195 residues: Probable GTP-binding protein EngB (195 aa).

Residues 24–195 (ELPEIALAGR…EAWDAILEKL (172 aa)) enclose the EngB-type G domain. GTP is bound by residues 32-39 (GRSNVGKS), 59-63 (GKTQL), 77-80 (DVPG), 144-147 (TKAD), and 176-178 (FSS). 2 residues coordinate Mg(2+): Ser-39 and Thr-61.

Belongs to the TRAFAC class TrmE-Era-EngA-EngB-Septin-like GTPase superfamily. EngB GTPase family. It depends on Mg(2+) as a cofactor.

Functionally, necessary for normal cell division and for the maintenance of normal septation. The protein is Probable GTP-binding protein EngB of Streptococcus pneumoniae (strain JJA).